A 559-amino-acid chain; its full sequence is 5'-AMP-activated protein kinase catalytic subunit alpha-1 (559 aa).

One can recognise a Protein kinase domain in the interval 27 to 279 (YILGDTLGVG…IKDIREHEWF (253 aa)). Residue threonine 32 is modified to Phosphothreonine. Residues 33–41 (LGVGTFGKV) and lysine 56 contribute to the ATP site. The active-site Proton acceptor is aspartate 150. The residue at position 183 (threonine 183) is a Phosphothreonine; by LKB1 and CaMKK2. The segment at 302-381 (EALKEVCEKF…PERVPFLVAE (80 aa)) is AIS. A Phosphothreonine modification is found at threonine 355. At serine 356 the chain carries Phosphoserine. Serine 360 bears the Phosphoserine; by ULK1 mark. Threonine 368 carries the post-translational modification Phosphothreonine; by ULK1. Position 382 is a phosphothreonine (threonine 382). Residue serine 397 is modified to Phosphoserine; by ULK1. Residues serine 467 and serine 486 each carry the phosphoserine modification. The span at 485–505 (KSGTATPQRSGSISNYRSCQR) shows a compositional bias: polar residues. The segment at 485–536 (KSGTATPQRSGSISNYRSCQRSDSDAEAQGKPSDVSLTSSVTSLDSSPVDVA) is disordered. Residue threonine 488 is modified to Phosphothreonine; by ULK1. At threonine 490 the chain carries Phosphothreonine. Residues serine 496, serine 508, serine 524, and serine 527 each carry the phosphoserine modification. Positions 516–535 (PSDVSLTSSVTSLDSSPVDV) are enriched in low complexity.

This sequence belongs to the protein kinase superfamily. CAMK Ser/Thr protein kinase family. SNF1 subfamily. In terms of assembly, AMPK is a heterotrimer of an alpha catalytic subunit (PRKAA1 or PRKAA2), a beta (PRKAB1 or PRKAB2) and a gamma non-catalytic subunits (PRKAG1, PRKAG2 or PRKAG3). Interacts with FNIP1 and FNIP2. Mg(2+) is required as a cofactor. Post-translationally, phosphorylated at Thr-183 by STK11/LKB1 in complex with STE20-related adapter-alpha (STRADA) pseudo kinase and CAB39. Also phosphorylated at Thr-183 by CAMKK2; triggered by a rise in intracellular calcium ions, without detectable changes in the AMP/ATP ratio. CAMKK1 can also phosphorylate Thr-183, but at a much lower level. Dephosphorylated by protein phosphatase 2A and 2C (PP2A and PP2C). Phosphorylated by ULK1 and ULK2; leading to negatively regulate AMPK activity and suggesting the existence of a regulatory feedback loop between ULK1, ULK2 and AMPK. Dephosphorylated by PPM1A and PPM1B. In terms of processing, ubiquitinated. Glycosylated; O-GlcNAcylated by OGT, promoting the AMP-activated protein kinase (AMPK) activity.

The protein resides in the cytoplasm. The protein localises to the nucleus. It carries out the reaction L-seryl-[protein] + ATP = O-phospho-L-seryl-[protein] + ADP + H(+). The catalysed reaction is L-threonyl-[protein] + ATP = O-phospho-L-threonyl-[protein] + ADP + H(+). The enzyme catalyses L-seryl-[acetyl-CoA carboxylase] + ATP = O-phospho-L-seryl-[acetyl-CoA carboxylase] + ADP + H(+). It catalyses the reaction L-seryl-[3-hydroxy-3-methylglutaryl-coenzyme A reductase] + ATP = O-phospho-L-seryl-[3-hydroxy-3-methylglutaryl-coenzyme A reductase] + ADP + H(+). It carries out the reaction L-seryl-[tau protein] + ATP = O-phospho-L-seryl-[tau protein] + ADP + H(+). The catalysed reaction is L-threonyl-[tau protein] + ATP = O-phospho-L-threonyl-[tau protein] + ADP + H(+). Its activity is regulated as follows. Activated by phosphorylation on Thr-183. Binding of AMP to non-catalytic gamma subunit (PRKAG1, PRKAG2 or PRKAG3) results in allosteric activation, inducing phosphorylation on Thr-183. AMP-binding to gamma subunit also sustains activity by preventing dephosphorylation of Thr-183. ADP also stimulates Thr-183 phosphorylation, without stimulating already phosphorylated AMPK. ATP promotes dephosphorylation of Thr-183, rendering the enzyme inactive. Under physiological conditions AMPK mainly exists in its inactive form in complex with ATP, which is much more abundant than AMP. Selectively inhibited by compound C (6-[4-(2-Piperidin-1-yl-ethoxy)-phenyl)]-3-pyridin-4-yl-pyyrazolo[1,5-a] pyrimidine. Activated by resveratrol, a natural polyphenol present in red wine, and S17834, a synthetic polyphenol. Its function is as follows. Catalytic subunit of AMP-activated protein kinase (AMPK), an energy sensor protein kinase that plays a key role in regulating cellular energy metabolism. In response to reduction of intracellular ATP levels, AMPK activates energy-producing pathways and inhibits energy-consuming processes: inhibits protein, carbohydrate and lipid biosynthesis, as well as cell growth and proliferation. AMPK acts via direct phosphorylation of metabolic enzymes, and by longer-term effects via phosphorylation of transcription regulators. Regulates lipid synthesis by phosphorylating and inactivating lipid metabolic enzymes such as ACACA, ACACB, GYS1, HMGCR and LIPE; regulates fatty acid and cholesterol synthesis by phosphorylating acetyl-CoA carboxylase (ACACA and ACACB) and hormone-sensitive lipase (LIPE) enzymes, respectively. Promotes lipolysis of lipid droplets by mediating phosphorylation of isoform 1 of CHKA (CHKalpha2). Regulates insulin-signaling and glycolysis by phosphorylating IRS1, PFKFB2 and PFKFB3. AMPK stimulates glucose uptake in muscle by increasing the translocation of the glucose transporter SLC2A4/GLUT4 to the plasma membrane, possibly by mediating phosphorylation of TBC1D4/AS160. Regulates transcription and chromatin structure by phosphorylating transcription regulators involved in energy metabolism such as CRTC2/TORC2, FOXO3, histone H2B, HDAC5, MEF2C, MLXIPL/ChREBP, EP300, HNF4A, p53/TP53, SREBF1, SREBF2 and PPARGC1A. Acts as a key regulator of glucose homeostasis in liver by phosphorylating CRTC2/TORC2, leading to CRTC2/TORC2 sequestration in the cytoplasm. In response to stress, phosphorylates 'Ser-36' of histone H2B (H2BS36ph), leading to promote transcription. Acts as a key regulator of cell growth and proliferation by phosphorylating FNIP1, TSC2, RPTOR, WDR24 and ATG1/ULK1: in response to nutrient limitation, negatively regulates the mTORC1 complex by phosphorylating RPTOR component of the mTORC1 complex and by phosphorylating and activating TSC2. Also phosphorylates and inhibits GATOR2 subunit WDR24 in response to nutrient limitation, leading to suppress glucose-mediated mTORC1 activation. In response to energetic stress, phosphorylates FNIP1, inactivating the non-canonical mTORC1 signaling, thereby promoting nuclear translocation of TFEB and TFE3, and inducing transcription of lysosomal or autophagy genes. In response to nutrient limitation, promotes autophagy by phosphorylating and activating ATG1/ULK1. In that process, it also activates WDR45/WIPI4. Phosphorylates CASP6, thereby preventing its autoprocessing and subsequent activation. In response to nutrient limitation, phosphorylates transcription factor FOXO3 promoting FOXO3 mitochondrial import. Also acts as a regulator of cellular polarity by remodeling the actin cytoskeleton; probably by indirectly activating myosin. AMPK also acts as a regulator of circadian rhythm by mediating phosphorylation of CRY1, leading to destabilize it. May regulate the Wnt signaling pathway by phosphorylating CTNNB1, leading to stabilize it. Also has tau-protein kinase activity: in response to amyloid beta A4 protein (APP) exposure, activated by CAMKK2, leading to phosphorylation of MAPT/TAU; however the relevance of such data remains unclear in vivo. Also phosphorylates CFTR, EEF2K, KLC1, NOS3 and SLC12A1. Regulates hepatic lipogenesis. Activated via SIRT3, represses sterol regulatory element-binding protein (SREBP) transcriptional activities and ATP-consuming lipogenesis to restore cellular energy balance. Upon stress, regulates mitochondrial fragmentation through phosphorylation of MTFR1L. This Mus musculus (Mouse) protein is 5'-AMP-activated protein kinase catalytic subunit alpha-1 (Prkaa1).